A 492-amino-acid chain; its full sequence is MGSNTEATEIPKMPLKIVFLTLPIAGHMLHIVDTASTFAIHGVECTIITTPANVPFIEKSISATNTTIRQFLSIRLVDFPHEAVGLPPGVENFSAVTCPDMRPKISKGLSIIQKPTEDLIKEISPDCIVSDMFYPWTSDFALEIGVPRVVFRGCGMFPMCCWHSIKSHLPHEKVDRDDEMIVLPTLPDHIEMRKSTLPDWVRKPTGYSYLMKMIDAAELKSYGVIVNSFSDLERDYEEYFKNVTGLKVWTVGPISLHVGRNEELEGSDEWVKWLDGKKLDSVIYVSFGGVAKFPPHQLREIAAGLESSGHDFVWVVRASDENGDQAEADEWSLQKFKEKMKKTNHGLVIESWVPQLMFLEHKAIGGMLTHVGWGTMLEGITAGLPLVTWPLYAEQFYNERLVVDVLKIGVGVGVKEFCGLDDIGKKETIGRENIEASVRLVMGDGEEAAAMRLRVKELSEASMKAVREGGSSKANIHDFLNELSTLRSLRQA.

His-27 functions as the Proton acceptor in the catalytic mechanism. Residue Asp-131 is the Charge relay of the active site. Trp-352, Val-353, His-370, Thr-375, Glu-378, and Tyr-392 together coordinate UDP.

It belongs to the UDP-glycosyltransferase family. Mainly expressed in flowers, flower buds and young leaves, and, to a lesser extent, in old leaves, stems and roots.

It functions in the pathway secondary metabolite biosynthesis; terpenoid biosynthesis. In terms of biological role, component of the oleanane-type triterpene saponins (e.g. saponarioside A and saponarioside B) biosynthetic pathway, leading to the production of natural products with detergent properties used as traditional sources of soap. A glycosyltransferase that mediates the conversion of QA-mono to QA-di via the elongation of the C-3 sugar chain with a D-galactose. This chain is UDP-glucosyl transferase 73DL1, found in Saponaria officinalis (Common soapwort).